Consider the following 409-residue polypeptide: Elongation factor Tu (409 aa).

Residues 10–214 form the tr-type G domain; that stretch reads KPHVNVGTIG…AVDNYIPTPE (205 aa). Positions 19 to 26 are G1; it reads GHVDHGKT. 19 to 26 lines the GTP pocket; the sequence is GHVDHGKT. A Mg(2+)-binding site is contributed by Thr-26. The G2 stretch occupies residues 60 to 64; that stretch reads GITIN. Residues 81–84 form a G3 region; the sequence is DCPG. GTP is bound by residues 81–85 and 136–139; these read DCPGH and NKVD. Residues 136–139 are G4; it reads NKVD. A G5 region spans residues 174–176; the sequence is SGL.

This sequence belongs to the TRAFAC class translation factor GTPase superfamily. Classic translation factor GTPase family. EF-Tu/EF-1A subfamily. As to quaternary structure, monomer.

The protein resides in the cytoplasm. It carries out the reaction GTP + H2O = GDP + phosphate + H(+). GTP hydrolase that promotes the GTP-dependent binding of aminoacyl-tRNA to the A-site of ribosomes during protein biosynthesis. This is Elongation factor Tu from Thermosynechococcus vestitus (strain NIES-2133 / IAM M-273 / BP-1).